Consider the following 641-residue polypeptide: Chaperone protein DnaK (641 aa).

A Phosphothreonine; by autocatalysis modification is found at threonine 200. Over residues 605-623 (AAEQGGSADAASGNAQASK) the composition is skewed to low complexity. The disordered stretch occupies residues 605 to 627 (AAEQGGSADAASGNAQASKAADD).

It belongs to the heat shock protein 70 family.

Acts as a chaperone. In Xanthomonas oryzae pv. oryzae (strain MAFF 311018), this protein is Chaperone protein DnaK.